The primary structure comprises 302 residues: Aspartate carbamoyltransferase catalytic subunit (302 aa).

Arg54 and Thr55 together coordinate carbamoyl phosphate. Lys82 provides a ligand contact to L-aspartate. The carbamoyl phosphate site is built by Arg104, His132, and Gln135. Arg165 and Arg217 together coordinate L-aspartate. The carbamoyl phosphate site is built by Gly257 and Pro258.

It belongs to the aspartate/ornithine carbamoyltransferase superfamily. ATCase family. In terms of assembly, heterododecamer (2C3:3R2) of six catalytic PyrB chains organized as two trimers (C3), and six regulatory PyrI chains organized as three dimers (R2).

It catalyses the reaction carbamoyl phosphate + L-aspartate = N-carbamoyl-L-aspartate + phosphate + H(+). It functions in the pathway pyrimidine metabolism; UMP biosynthesis via de novo pathway; (S)-dihydroorotate from bicarbonate: step 2/3. Its function is as follows. Catalyzes the condensation of carbamoyl phosphate and aspartate to form carbamoyl aspartate and inorganic phosphate, the committed step in the de novo pyrimidine nucleotide biosynthesis pathway. The chain is Aspartate carbamoyltransferase catalytic subunit from Thermus thermophilus (strain ATCC BAA-163 / DSM 7039 / HB27).